We begin with the raw amino-acid sequence, 209 residues long: Large ribosomal subunit protein uL3 (209 aa).

A disordered region spans residues 113–155; it reads TSRGHGYQGNIKRHHQSRGPETHGSRYHRIPGSMGSIINRVPK.

Belongs to the universal ribosomal protein uL3 family. As to quaternary structure, part of the 50S ribosomal subunit. Forms a cluster with proteins L14 and L19.

One of the primary rRNA binding proteins, it binds directly near the 3'-end of the 23S rRNA, where it nucleates assembly of the 50S subunit. This is Large ribosomal subunit protein uL3 from Lactobacillus delbrueckii subsp. bulgaricus (strain ATCC 11842 / DSM 20081 / BCRC 10696 / JCM 1002 / NBRC 13953 / NCIMB 11778 / NCTC 12712 / WDCM 00102 / Lb 14).